We begin with the raw amino-acid sequence, 315 residues long: Cobalamin biosynthesis protein CobD (315 aa).

A run of 7 helical transmembrane segments spans residues 1-21 (MLDI…YWFP), 50-70 (VFGG…PFII), 79-99 (VIYH…KSLH), 151-171 (DGII…AMMY), 209-229 (VTGI…FYSI), 250-270 (AAAA…GEVV), and 291-311 (IILM…IICF).

This sequence belongs to the CobD/CbiB family.

It localises to the cell membrane. The protein operates within cofactor biosynthesis; adenosylcobalamin biosynthesis. Functionally, converts cobyric acid to cobinamide by the addition of aminopropanol on the F carboxylic group. The chain is Cobalamin biosynthesis protein CobD from Clostridium acetobutylicum (strain ATCC 824 / DSM 792 / JCM 1419 / IAM 19013 / LMG 5710 / NBRC 13948 / NRRL B-527 / VKM B-1787 / 2291 / W).